A 705-amino-acid polypeptide reads, in one-letter code: Putative membrane protein SCO0839 (705 aa).

12 consecutive transmembrane segments (helical) span residues 16-36 (WLVP…LGPY), 177-197 (GIDG…LLLV), 202-222 (LLPL…CAIV), 237-257 (VQGI…LLLT), 281-301 (SWGA…ALLL), 316-336 (IGIV…LVLL), 373-393 (IWAL…TLSS), 529-549 (LIVP…LRSL), 554-574 (LLVA…ALVF), 587-607 (VPLY…IFLM), 627-647 (LTAT…TFAA), and 648-668 (LGVI…FGVL).

It belongs to the resistance-nodulation-cell division (RND) (TC 2.A.6) family. MmpL subfamily.

The protein resides in the cell membrane. This is Putative membrane protein SCO0839 from Streptomyces coelicolor (strain ATCC BAA-471 / A3(2) / M145).